Here is a 428-residue protein sequence, read N- to C-terminus: 47 kDa outer membrane protein (428 aa).

Positions 1–25 (MAKTSKFTQTLLASALAVVAGSASA) are cleaved as a signal peptide.

It belongs to the OmpP1/FadL family.

It localises to the cell outer membrane. This chain is 47 kDa outer membrane protein, found in Pasteurella multocida (strain Pm70).